Here is a 122-residue protein sequence, read N- to C-terminus: Ribosome-binding factor A (122 aa).

The protein belongs to the RbfA family. Monomer. Binds 30S ribosomal subunits, but not 50S ribosomal subunits or 70S ribosomes.

It localises to the cytoplasm. One of several proteins that assist in the late maturation steps of the functional core of the 30S ribosomal subunit. Associates with free 30S ribosomal subunits (but not with 30S subunits that are part of 70S ribosomes or polysomes). Required for efficient processing of 16S rRNA. May interact with the 5'-terminal helix region of 16S rRNA. This chain is Ribosome-binding factor A, found in Albidiferax ferrireducens (strain ATCC BAA-621 / DSM 15236 / T118) (Rhodoferax ferrireducens).